We begin with the raw amino-acid sequence, 854 residues long: Protein asteroid (854 aa).

The interval 368-427 (SEEECSDDEHSSSSDEKFSDVEEGEDQEEADNQDEEQQEENQDVDSGDEEEEEADEGLEL) is disordered. Residues 375–387 (DEHSSSSDEKFSD) show a composition bias toward basic and acidic residues. Positions 388 to 427 (VEEGEDQEEADNQDEEQQEENQDVDSGDEEEEEADEGLEL) are enriched in acidic residues.

This sequence belongs to the asteroid family. In terms of tissue distribution, expressed in the proliferative tissues of embryos and in the mitotically active tissue anterior to the morphogenetic furrow in eye imaginal disks.

In terms of biological role, may function in EGF receptor signaling. May play a role in compound eye morphogenesis. The protein is Protein asteroid (ast) of Drosophila melanogaster (Fruit fly).